Here is a 260-residue protein sequence, read N- to C-terminus: Indole-3-glycerol phosphate synthase (260 aa).

Belongs to the TrpC family.

The enzyme catalyses 1-(2-carboxyphenylamino)-1-deoxy-D-ribulose 5-phosphate + H(+) = (1S,2R)-1-C-(indol-3-yl)glycerol 3-phosphate + CO2 + H2O. It functions in the pathway amino-acid biosynthesis; L-tryptophan biosynthesis; L-tryptophan from chorismate: step 4/5. This chain is Indole-3-glycerol phosphate synthase, found in Neisseria gonorrhoeae (strain ATCC 700825 / FA 1090).